The primary structure comprises 222 residues: Cysteine protease inhibitor 9 (222 aa).

The first 26 residues, 1–26 (MKSINILSFLLLSSTLSLVAFARSFS), serve as a signal peptide directing secretion. Residues 27-42 (SENPIVLPSTCHDDDN) constitute a propeptide that is removed on maturation. Residues 29–34 (NPIVLP) carry the Vacuolar targeting signal motif. 2 disulfides stabilise this stretch: Cys-84-Cys-136 and Cys-185-Cys-191.

Belongs to the protease inhibitor I3 (leguminous Kunitz-type inhibitor) family. As to expression, tuber.

The protein resides in the vacuole. Putative inhibitor of cysteine proteases. Does not inhibit papain. May protect the plant by inhibiting proteases of invading organisms. The polypeptide is Cysteine protease inhibitor 9 (Solanum tuberosum (Potato)).